The following is a 154-amino-acid chain: Ecotin-like protein 2 (154 aa).

This sequence belongs to the protease inhibitor I11 (ecotin) family.

The protein is Ecotin-like protein 2 of Trypanosoma brucei brucei (strain 927/4 GUTat10.1).